Reading from the N-terminus, the 127-residue chain is Large ribosomal subunit protein bL17 (127 aa).

The protein belongs to the bacterial ribosomal protein bL17 family. Part of the 50S ribosomal subunit. Contacts protein L32.

The polypeptide is Large ribosomal subunit protein bL17 (Xanthomonas oryzae pv. oryzae (strain KACC10331 / KXO85)).